A 640-amino-acid polypeptide reads, in one-letter code: MAAALPLQPSTTASATTTATAVALGEVEDEGLLASLFRDRFPEAQWREKPDVGRYLRELSGSGLDRLRREPERLAEERAQRLQQTRDLAFANYKTFIRGAECTERIHRLFGDVEASLGRLLDRLPRFQQSCRNFVKEAEEISSSRRMNTLTLNRHTEILEILEIPQLMDTCVRNSYHEEALELAAYVRRLERKYSSIPVIQGIVNEVRQSMQLMLSQLIQQLRTNIQLPACLRVIGYLRRMDVFTEAELRVKFLQARDAWLRSILTAIPNDDPYFHITKTIEACRVHLFDIITQYRAIFSDEDPLLPPAMGEYTVNEGAIFHGWVLQKISQFLQVLETDLYRGIGGRLDSLLGQCMYFGLSFSRVGADFRGQLAPVFQRVAISTFQKAVEEAVEKFQDEMTSYTLISTAAILGSSNTPATVPATQPGTLQPPMVLLDFPPLACFLNNILVAFNDLRLCCPVALAQDVTGTLENALTKVTKTILAFHRAEEAVFSSGEHEIFVQFCTAFLEDLVPYLNRCLQVLFPPAQIAQTLGISPTQLSKHGNLGHVNISAIQEPLAFILPKRETVFCLDEQELGPDLVAPAPELPAEQRSMEPVTEKREPGEPLPQEPMEGEPLPAEPPSEGGAIGSVPCPQPGEQP.

The interval Leu580–Pro640 is disordered.

It belongs to the COG8 family. Component of the conserved oligomeric Golgi complex which is composed of eight different subunits and is required for normal Golgi morphology and localization.

It is found in the golgi apparatus membrane. Its function is as follows. Required for normal Golgi function. The chain is Conserved oligomeric Golgi complex subunit 8 (Cog8) from Mus musculus (Mouse).